Here is a 144-residue protein sequence, read N- to C-terminus: TSC22 domain family protein 1 (144 aa).

A leucine-zipper region spans residues 77–98 (LKEQIKELIEKNSQLEQENNLL). Residues 109-144 (QFQAQLQTGSPPATTQPQGTTQPPAQPASQGSGPTA) are disordered. The segment covering 115–144 (QTGSPPATTQPQGTTQPPAQPASQGSGPTA) has biased composition (low complexity).

Belongs to the TSC-22/Dip/Bun family. As to quaternary structure, forms homodimers. Forms a heterodimer with TSC22D4/THG1. Interacts with histone H1-2. Interacts with GNL3.

The protein localises to the cytoplasm. It is found in the nucleus. Its function is as follows. Transcriptional repressor. Plays a role in the repression of hematopoietic precursor cell growth. Promotes IL2 deprivation-induced apoptosis in T-lymphocytes, via repression of TSC22D3/GILZ transcription and activation of the caspase cascade. Positively regulates cell death in response to TGFB3 during mammary gland involution. In Bos taurus (Bovine), this protein is TSC22 domain family protein 1.